The following is a 79-amino-acid chain: D-alanyl carrier protein (79 aa).

Residues 2-79 (AEFKEQVLDI…MVIKKLEEIR (78 aa)) enclose the Carrier domain. O-(pantetheine 4'-phosphoryl)serine is present on S37.

It belongs to the DltC family. Post-translationally, 4'-phosphopantetheine is transferred from CoA to a specific serine of apo-DCP.

The protein localises to the cytoplasm. The protein operates within cell wall biogenesis; lipoteichoic acid biosynthesis. Functionally, carrier protein involved in the D-alanylation of lipoteichoic acid (LTA). The loading of thioester-linked D-alanine onto DltC is catalyzed by D-alanine--D-alanyl carrier protein ligase DltA. The DltC-carried D-alanyl group is further transferred to cell membrane phosphatidylglycerol (PG) by forming an ester bond, probably catalyzed by DltD. D-alanylation of LTA plays an important role in modulating the properties of the cell wall in Gram-positive bacteria, influencing the net charge of the cell wall. The polypeptide is D-alanyl carrier protein (Bacillus anthracis (strain CDC 684 / NRRL 3495)).